We begin with the raw amino-acid sequence, 74 residues long: Psi-conotoxin PrIIIE (74 aa).

The first 19 residues, 1–19, serve as a signal peptide directing secretion; the sequence is MSKLGVLLTICLLLFPITA. Positions 20-50 are excised as a propeptide; sequence LPVDGDQPADRPVERMQDNISSEQHPFFEKR. 3 cysteine pairs are disulfide-bonded: C54–C66, C55–C71, and C61–C72. C72 is subject to Cysteine amide.

The protein belongs to the conotoxin M superfamily. As to expression, expressed by the venom duct.

It localises to the secreted. In terms of biological role, psi-conotoxins act on postsynaptic membranes, and act as non-competitive antagonist of nicotinic acetylcholine receptors (nAChR). Reversibly inhibits both adult- and fetal-types nAChR. The inhibition potency against the adult- (alpha-1/beta-1/epsilon/delta) is higher than against the fetal-type (alpha-1/beta-1/gamma/delta). Induces flaccid paralysis in goldfish, but does not induce any remarkable behavior in mice and does not block action potential in directly stimulated frog muscle preparations. This Conus parius (Cone snail) protein is Psi-conotoxin PrIIIE.